A 141-amino-acid polypeptide reads, in one-letter code: Large ribosomal subunit protein uL11A (141 aa).

The protein belongs to the universal ribosomal protein uL11 family. In terms of assembly, part of the ribosomal stalk of the 50S ribosomal subunit. Interacts with L10 and the large rRNA to form the base of the stalk. L10 forms an elongated spine to which L12 dimers bind in a sequential fashion forming a multimeric L10(L12)X complex. In terms of processing, one or more lysine residues are methylated.

In terms of biological role, forms part of the ribosomal stalk which helps the ribosome interact with GTP-bound translation factors. This Bacillus cereus (strain ATCC 14579 / DSM 31 / CCUG 7414 / JCM 2152 / NBRC 15305 / NCIMB 9373 / NCTC 2599 / NRRL B-3711) protein is Large ribosomal subunit protein uL11A.